Reading from the N-terminus, the 127-residue chain is EF-hand calcium-binding domain-containing protein 10 (127 aa).

The region spanning 63 to 98 is the EF-hand domain; sequence MDNSNIVAMFEMMDSSGRGTISFVQYKEALKTLGLC.

This Homo sapiens (Human) protein is EF-hand calcium-binding domain-containing protein 10 (EFCAB10).